The following is a 186-amino-acid chain: Transposon Tn501 resolvase (186 aa).

In terms of domain architecture, Resolvase/invertase-type recombinase catalytic spans 4–137 (HRIGYVRVSS…EGITLAKQRG (134 aa)). Residue S12 is the O-(5'-phospho-DNA)-serine intermediate of the active site. Positions 17-38 (NPERQLEQTQVSKVFTDKASGK) are disordered. The segment at residues 164–183 (KAQLAREFNISRETLYQYLR) is a DNA-binding region (H-T-H motif).

The protein belongs to the site-specific recombinase resolvase family.

Functionally, resolvase catalyzes the resolution (a site-specific recombination) of the cointegrated replicon to yield the final transposition products. The polypeptide is Transposon Tn501 resolvase (tnpR) (Pseudomonas aeruginosa).